The chain runs to 73 residues: Translation initiation factor IF-1 (73 aa).

In terms of domain architecture, S1-like spans 1–72 (MAKDEIIEFE…SKGRITYRGK (72 aa)).

Belongs to the IF-1 family. Component of the 30S ribosomal translation pre-initiation complex which assembles on the 30S ribosome in the order IF-2 and IF-3, IF-1 and N-formylmethionyl-tRNA(fMet); mRNA recruitment can occur at any time during PIC assembly.

The protein resides in the cytoplasm. Its function is as follows. One of the essential components for the initiation of protein synthesis. Stabilizes the binding of IF-2 and IF-3 on the 30S subunit to which N-formylmethionyl-tRNA(fMet) subsequently binds. Helps modulate mRNA selection, yielding the 30S pre-initiation complex (PIC). Upon addition of the 50S ribosomal subunit IF-1, IF-2 and IF-3 are released leaving the mature 70S translation initiation complex. This Psychrobacter arcticus (strain DSM 17307 / VKM B-2377 / 273-4) protein is Translation initiation factor IF-1.